An 841-amino-acid polypeptide reads, in one-letter code: Homeobox-leucine zipper protein ATHB-9 (841 aa).

Over residues 1 to 18 (MMAHHSMDDRDSPDKGFD) the composition is skewed to basic and acidic residues. The disordered stretch occupies residues 1-21 (MMAHHSMDDRDSPDKGFDSGK). A DNA-binding region (homeobox) is located at residues 18-81 (DSGKYVRYTP…NRRCREKQRK (64 aa)). Positions 85–118 (RLQTVNRKLSAMNKLLMEENDRLQKQVSNLVYEN) form a coiled coil. 2 disordered regions span residues 140 to 162 (VVVSGQQRQQQNPTHQHPQRDVN) and 602 to 630 (DQKTNPNDHQSASRTRDLASSLDGSTKTD). Residues 145-155 (QQRQQQNPTHQ) are compositionally biased toward low complexity. The START domain occupies 160-388 (DVNNPANLLS…IAQETSGEVQ (229 aa)). The segment covering 603-614 (QKTNPNDHQSAS) has biased composition (polar residues).

Belongs to the HD-ZIP homeobox family. Class III subfamily. Binds DNA as homodimer. Interacts with ESR1 and ESR2. Interacts with ZPR3.

The protein localises to the nucleus. Probable transcription factor involved in the determination of adaxial-abaxial polarity in ovule primordium. Specifies adaxial leaf fates. Binds to the DNA sequence 5'-GTAAT[GC]ATTAC-3'. The polypeptide is Homeobox-leucine zipper protein ATHB-9 (ATHB-9) (Arabidopsis thaliana (Mouse-ear cress)).